The primary structure comprises 345 residues: Probable dual-specificity RNA methyltransferase RlmN (345 aa).

Glutamate 90 serves as the catalytic Proton acceptor. Positions glutamine 96 to aspartate 327 constitute a Radical SAM core domain. Cysteines 103 and 332 form a disulfide. [4Fe-4S] cluster-binding residues include cysteine 110, cysteine 114, and cysteine 117. S-adenosyl-L-methionine-binding positions include glycine 160–glutamate 161, serine 192, serine 215–histidine 217, and asparagine 291. Cysteine 332 functions as the S-methylcysteine intermediate in the catalytic mechanism.

Belongs to the radical SAM superfamily. RlmN family. The cofactor is [4Fe-4S] cluster.

It localises to the cytoplasm. It carries out the reaction adenosine(2503) in 23S rRNA + 2 reduced [2Fe-2S]-[ferredoxin] + 2 S-adenosyl-L-methionine = 2-methyladenosine(2503) in 23S rRNA + 5'-deoxyadenosine + L-methionine + 2 oxidized [2Fe-2S]-[ferredoxin] + S-adenosyl-L-homocysteine. The catalysed reaction is adenosine(37) in tRNA + 2 reduced [2Fe-2S]-[ferredoxin] + 2 S-adenosyl-L-methionine = 2-methyladenosine(37) in tRNA + 5'-deoxyadenosine + L-methionine + 2 oxidized [2Fe-2S]-[ferredoxin] + S-adenosyl-L-homocysteine. Functionally, specifically methylates position 2 of adenine 2503 in 23S rRNA and position 2 of adenine 37 in tRNAs. The sequence is that of Probable dual-specificity RNA methyltransferase RlmN from Spiroplasma citri.